The primary structure comprises 273 residues: Phosphate import ATP-binding protein PstB (273 aa).

One can recognise an ABC transporter domain in the interval 26–268; the sequence is MRGEKVCVFY…PTEKRTQDYI (243 aa). 58 to 65 is a binding site for ATP; that stretch reads GPSGCGKS.

It belongs to the ABC transporter superfamily. Phosphate importer (TC 3.A.1.7) family. The complex is composed of two ATP-binding proteins (PstB), two transmembrane proteins (PstC and PstA) and a solute-binding protein (PstS).

The protein localises to the cell inner membrane. It catalyses the reaction phosphate(out) + ATP + H2O = ADP + 2 phosphate(in) + H(+). Functionally, part of the ABC transporter complex PstSACB involved in phosphate import. Responsible for energy coupling to the transport system. This chain is Phosphate import ATP-binding protein PstB, found in Brucella abortus (strain 2308).